A 143-amino-acid polypeptide reads, in one-letter code: Hemoglobin subunit alpha-1 (143 aa).

Ser2 carries the post-translational modification N-acetylserine. The Globin domain occupies Ser2–Arg143. Position 60 (His60) interacts with O2. His89 contributes to the heme b binding site.

The protein belongs to the globin family. Hb1 is a heterotetramer of two alpha-1 chains and two beta-1 chains. As to expression, red blood cells.

In terms of biological role, involved in oxygen transport from gills to the various peripheral tissues. The protein is Hemoglobin subunit alpha-1 (hba1) of Anarhichas minor (Arctic spotted wolffish).